The sequence spans 312 residues: tRNA-cytidine(32) 2-sulfurtransferase (312 aa).

The PP-loop motif motif lies at S39–S44. Residues C114, C117, and C205 each contribute to the [4Fe-4S] cluster site.

It belongs to the TtcA family. In terms of assembly, homodimer. It depends on Mg(2+) as a cofactor. The cofactor is [4Fe-4S] cluster.

The protein resides in the cytoplasm. The catalysed reaction is cytidine(32) in tRNA + S-sulfanyl-L-cysteinyl-[cysteine desulfurase] + AH2 + ATP = 2-thiocytidine(32) in tRNA + L-cysteinyl-[cysteine desulfurase] + A + AMP + diphosphate + H(+). The protein operates within tRNA modification. Catalyzes the ATP-dependent 2-thiolation of cytidine in position 32 of tRNA, to form 2-thiocytidine (s(2)C32). The sulfur atoms are provided by the cysteine/cysteine desulfurase (IscS) system. The sequence is that of tRNA-cytidine(32) 2-sulfurtransferase from Cupriavidus pinatubonensis (strain JMP 134 / LMG 1197) (Cupriavidus necator (strain JMP 134)).